The primary structure comprises 125 residues: Protein ELF4-LIKE 1 (125 aa).

Residues 1–18 (MEASRNRSLVGNNRSPEM) are compositionally biased toward polar residues. The tract at residues 1–28 (MEASRNRSLVGNNRSPEMNENDGEDVAA) is disordered.

This sequence belongs to the EARLY FLOWERING 4 family. In terms of assembly, homodimer.

It is found in the nucleus. Component of the central CCA1/LHY-TOC1 feedback loop in the circadian clock that promotes clock accuracy and is required for sustained rhythms in the absence of daily light/dark cycles. The chain is Protein ELF4-LIKE 1 (EFL1) from Arabidopsis thaliana (Mouse-ear cress).